A 252-amino-acid chain; its full sequence is ATP-dependent L-serine kinase (252 aa).

Glu35 is an active-site residue. Val73 is an O-phospho-L-serine binding site. Position 74 (Asp74) interacts with Mg(2+). The O-phospho-L-serine site is built by Gly75, His76, His77, Trp107, Lys231, Thr233, and His235.

The protein belongs to the SerK family. Monomer. Requires Mg(2+) as cofactor.

It catalyses the reaction L-serine + ATP = O-phospho-L-serine + ADP + H(+). In terms of biological role, free serine kinase that uses ATP to phosphorylate L-serine to yield O-phospho-L-serine and ADP. Can use ATP, UTP, CTP, GTP and the inorganic polyphosphates triphosphate and tetraphosphate as phosphate donors, with a preference for nucleoside 5'-triphosphates, but cannot use ADP. The catalytic efficiency is highest for ATP. Is specific for L-serine and cannot phosphorylate structurally similar compounds such as D-serine, L-threonine, L-homoserine, hydroxypyruvate, 3-hydroxypropionate and DL-glycerate. Likely contributes to serine metabolism, including cysteine biosynthesis. This Staphylothermus marinus (strain ATCC 43588 / DSM 3639 / JCM 9404 / F1) protein is ATP-dependent L-serine kinase.